A 277-amino-acid polypeptide reads, in one-letter code: Insulin-induced gene 1 protein (277 aa).

The Cytoplasmic portion of the chain corresponds to 1–84 (MPRLHDHFWS…PYPNTWHHRL (84 aa)). Residues 51–66 (HGAPDADPAPRGRSAA) are compositionally biased toward low complexity. The interval 51-73 (HGAPDADPAPRGRSAAMSGPEPG) is disordered. The helical transmembrane segment at 85–107 (LQRSLVLFSVGVVLALVLNLLQI) threads the bilayer. Residues 108-126 (QRNVTLFPEEVIATIFSSA) are Lumenal-facing. Residues 127–144 (WWVPPCCGTAAAVVGLLY) form a helical membrane-spanning segment. The Cytoplasmic portion of the chain corresponds to 145 to 159 (PCIDSHLGEPHKFKR). Residues Lys-156 and Lys-158 each participate in a glycyl lysine isopeptide (Lys-Gly) (interchain with G-Cter in ubiquitin) cross-link. The helical transmembrane segment at 160 to 182 (EWASVMRCIAVFVGINHASAKLD) threads the bilayer. The Lumenal portion of the chain corresponds to 183 to 185 (FAN). Residues 186–204 (NVQLSLTLAALSLGLWWTF) traverse the membrane as a helical segment. The Cytoplasmic portion of the chain corresponds to 205–209 (DRSRS). The residue at position 207 (Ser-207) is a Phosphoserine; by PCK1. Residues 210–231 (GLGLGITIAFLATLITQFLVYN) form a helical membrane-spanning segment. The Lumenal portion of the chain corresponds to 232–245 (GVYQYTSPDFLYIR). A helical membrane pass occupies residues 246–263 (SWLPCIFFSGGVTVGNIG). The Cytoplasmic portion of the chain corresponds to 264–277 (RQLAMGVPEKPHSD). The short motif at 271-277 (PEKPHSD) is the KxHxx element.

Belongs to the INSIG family. Interacts with SCAP; interaction is direct and only takes place in the presence of sterols; it prevents interaction between SCAP and the coat protein complex II (COPII). Associates with the SCAP-SREBP complex (composed of SCAP and SREBF1/SREBP1 or SREBF2/SREBP2); association is mediated via its interaction with SCAP and only takes place in the presence of sterols. Interaction with SCAP is mutually exclusive with PAQR3. Interacts with HMGCR (via its SSD); the interaction, accelerated by sterols, leads to the recruitment of HMGCR to AMFR/gp78 for its ubiquitination by the sterol-mediated ERAD pathway. Interacts with AMFR/gp78 (via its membrane domain); the interaction recruits HMCR at the ER membrane for its ubiquitination and degradation by the sterol-mediated ERAD pathway. Interacts with SOAT2/ACAT2; leading to promote recruitment of AMFR/gp78 and subsequent ubiquitination of SOAT2/ACAT2. Interacts with RNF139. Interacts with RNF145. Post-translationally, phosphorylation at Ser-207 by PCK1 reduces binding to oxysterol, disrupting the interaction between INSIG1 and SCAP, thereby promoting nuclear translocation of SREBP proteins (SREBF1/SREBP1 or SREBF2/SREBP2) and subsequent transcription of downstream lipogenesis-related genes. Ubiquitinated by AMFR/gp78 in response to sterol deprivation, leading to its degradation: when the SCAP-SREBP complex becomes dissociated from INSIG1, INSIG1 is then ubiquitinated and degraded in proteasomes. Although ubiquitination is required for rapid INSIG1 degradation, it is not required for release of the SCAP-SREBP complex. Ubiquitinated by RNF139. Expressed in all tissues tested with highest expression in the liver.

Its subcellular location is the endoplasmic reticulum membrane. Oxysterol-binding protein that mediates feedback control of cholesterol synthesis by controlling both endoplasmic reticulum to Golgi transport of SCAP and degradation of HMGCR. Acts as a negative regulator of cholesterol biosynthesis by mediating the retention of the SCAP-SREBP complex in the endoplasmic reticulum, thereby blocking the processing of sterol regulatory element-binding proteins (SREBPs) SREBF1/SREBP1 and SREBF2/SREBP2. Binds oxysterol, including 25-hydroxycholesterol, regulating interaction with SCAP and retention of the SCAP-SREBP complex in the endoplasmic reticulum. In presence of oxysterol, interacts with SCAP, retaining the SCAP-SREBP complex in the endoplasmic reticulum, thereby preventing SCAP from escorting SREBF1/SREBP1 and SREBF2/SREBP2 to the Golgi. Sterol deprivation or phosphorylation by PCK1 reduce oxysterol-binding, disrupting the interaction between INSIG1 and SCAP, thereby promoting Golgi transport of the SCAP-SREBP complex, followed by processing and nuclear translocation of SREBF1/SREBP1 and SREBF2/SREBP2. Also regulates cholesterol synthesis by regulating degradation of HMGCR: initiates the sterol-mediated ubiquitin-mediated endoplasmic reticulum-associated degradation (ERAD) of HMGCR via recruitment of the reductase to the ubiquitin ligases AMFR/gp78 and/or RNF139. Also regulates degradation of SOAT2/ACAT2 when the lipid levels are low: initiates the ubiquitin-mediated degradation of SOAT2/ACAT2 via recruitment of the ubiquitin ligases AMFR/gp78. This Homo sapiens (Human) protein is Insulin-induced gene 1 protein.